Here is a 137-residue protein sequence, read N- to C-terminus: Large ribosomal subunit protein uL16 (137 aa).

The protein belongs to the universal ribosomal protein uL16 family. In terms of assembly, part of the 50S ribosomal subunit.

In terms of biological role, binds 23S rRNA and is also seen to make contacts with the A and possibly P site tRNAs. The sequence is that of Large ribosomal subunit protein uL16 from Afipia carboxidovorans (strain ATCC 49405 / DSM 1227 / KCTC 32145 / OM5) (Oligotropha carboxidovorans).